Consider the following 462-residue polypeptide: Cysteine--tRNA ligase (462 aa).

Zn(2+) is bound at residue cysteine 29. The 'HIGH' region signature appears at 31 to 41; the sequence is PTVYDHAHIGN. The Zn(2+) site is built by cysteine 214, histidine 239, and glutamate 243. Residues 272–276 carry the 'KMSKS' region motif; it reads KMSKS. Lysine 275 is an ATP binding site.

Belongs to the class-I aminoacyl-tRNA synthetase family. As to quaternary structure, monomer. Zn(2+) is required as a cofactor.

The protein localises to the cytoplasm. The enzyme catalyses tRNA(Cys) + L-cysteine + ATP = L-cysteinyl-tRNA(Cys) + AMP + diphosphate. The protein is Cysteine--tRNA ligase of Azorhizobium caulinodans (strain ATCC 43989 / DSM 5975 / JCM 20966 / LMG 6465 / NBRC 14845 / NCIMB 13405 / ORS 571).